The primary structure comprises 542 residues: N-substituted formamide deformylase (542 aa).

Positions 1–2 are excised as a propeptide; it reads MT.

As to quaternary structure, homodimer. Zn(2+) is required as a cofactor.

The catalysed reaction is N-benzylformamide + H2O = benzylamine + formate. Completely inhibited by HgCl(2), CuCl, CuCl(2) and AgNO(3). Partially inhibited by ZnCl(2) and SnCl(2). Almost completely inhibited by the reducing reagent DTT. Partially inhibited by phenylhydrazine. Moderately inhibited by phenanthroline and 8-hydroxyquinoline. Completely inhibited by the thiol-specific inhibitors N-ethylmaleimide and p-chloromercuribenzoate. Not inhibited by the carbonyl-specific inhibitors aminoguanidine and semicarbazide, the chelating agents alpha,alpha'-dipyridyl, KCN, diethyldithiocarbamate and EDTA, or the oxidizing reagents and serine-modifying reagents such as H(2)O(2), ammonium persulfate, phenylmethanesulfonyl fluoride and diisopropyl fluorophosphates. In terms of biological role, hydrolyzes N-substituted formamides, but not amides. N-benzylformamide is the preferred substrate, while N-butylformamide is hydrolyzed at a much lower rate. Has very low activity towards allylformamide, N-(2-cyclohex-1-enylethyl)formamide and N-(alpha-methylbenzyl)formamide. The protein is N-substituted formamide deformylase of Arthrobacter pascens.